Here is an 89-residue protein sequence, read N- to C-terminus: Small ribosomal subunit protein uS15 (89 aa).

This sequence belongs to the universal ribosomal protein uS15 family. As to quaternary structure, part of the 30S ribosomal subunit. Forms a bridge to the 50S subunit in the 70S ribosome, contacting the 23S rRNA.

In terms of biological role, one of the primary rRNA binding proteins, it binds directly to 16S rRNA where it helps nucleate assembly of the platform of the 30S subunit by binding and bridging several RNA helices of the 16S rRNA. Its function is as follows. Forms an intersubunit bridge (bridge B4) with the 23S rRNA of the 50S subunit in the ribosome. This chain is Small ribosomal subunit protein uS15, found in Lactobacillus gasseri (strain ATCC 33323 / DSM 20243 / BCRC 14619 / CIP 102991 / JCM 1131 / KCTC 3163 / NCIMB 11718 / NCTC 13722 / AM63).